We begin with the raw amino-acid sequence, 384 residues long: 23S rRNA (uracil(747)-C(5))-methyltransferase RlmC (384 aa).

4 residues coordinate [4Fe-4S] cluster: Cys-7, Cys-15, Cys-18, and Cys-94. 4 residues coordinate S-adenosyl-L-methionine: Gln-219, Phe-248, Glu-269, and Asn-316. Cys-343 (nucleophile) is an active-site residue.

Belongs to the class I-like SAM-binding methyltransferase superfamily. RNA M5U methyltransferase family. RlmC subfamily.

The catalysed reaction is uridine(747) in 23S rRNA + S-adenosyl-L-methionine = 5-methyluridine(747) in 23S rRNA + S-adenosyl-L-homocysteine + H(+). Catalyzes the formation of 5-methyl-uridine at position 747 (m5U747) in 23S rRNA. The chain is 23S rRNA (uracil(747)-C(5))-methyltransferase RlmC from Shewanella sp. (strain MR-7).